We begin with the raw amino-acid sequence, 192 residues long: Ion-translocating oxidoreductase complex subunit B (192 aa).

The segment at 1–26 (MNTIWIAVGALALLGLVFGAILGYAS) is hydrophobic. In terms of domain architecture, 4Fe-4S spans 32–91 (EDDPVVEKIDAILPQSQCGQCGYPGCRPYAEAVGLQGEKINRCAPGGEAVMLKIAELLNV). Cysteine 49, cysteine 52, cysteine 57, cysteine 74, cysteine 117, cysteine 120, cysteine 123, cysteine 127, cysteine 147, cysteine 150, cysteine 153, and cysteine 157 together coordinate [4Fe-4S] cluster. 2 4Fe-4S ferredoxin-type domains span residues 108–137 (MLAVIDENNCIGCTKCIQACPVDAIVGATR) and 138–167 (AMHTVMSDLCTGCNLCVDPCPTHCIELRPV).

Belongs to the 4Fe4S bacterial-type ferredoxin family. RnfB subfamily. The complex is composed of six subunits: RsxA, RsxB, RsxC, RsxD, RsxE and RsxG. It depends on [4Fe-4S] cluster as a cofactor.

The protein resides in the cell inner membrane. Part of a membrane-bound complex that couples electron transfer with translocation of ions across the membrane. Required to maintain the reduced state of SoxR. The polypeptide is Ion-translocating oxidoreductase complex subunit B (Salmonella newport (strain SL254)).